Consider the following 430-residue polypeptide: C4-dicarboxylate transport protein (430 aa).

Transmembrane regions (helical) follow at residues 9 to 29, 45 to 65, 79 to 99, 149 to 169, 185 to 205, 223 to 243, 308 to 328, and 356 to 376; these read VLYV…HFYP, LIKM…IAGM, LLYF…ATHL, GEIL…AHLG, VLFG…FGAM, LIGT…GAIA, IYMT…LTWM, and AATL…ILGI.

Belongs to the dicarboxylate/amino acid:cation symporter (DAACS) (TC 2.A.23) family.

The protein resides in the cell inner membrane. Responsible for the transport of dicarboxylates such as succinate, fumarate, and malate from the periplasm across the membrane. The protein is C4-dicarboxylate transport protein of Burkholderia orbicola (strain MC0-3).